Reading from the N-terminus, the 115-residue chain is Regulator of ribonuclease activity B (115 aa).

The protein belongs to the RraB family. In terms of assembly, interacts with the C-terminal region of Rne.

The protein resides in the cytoplasm. Its function is as follows. Globally modulates RNA abundance by binding to RNase E (Rne) and regulating its endonucleolytic activity. Can modulate Rne action in a substrate-dependent manner by altering the composition of the degradosome. The polypeptide is Regulator of ribonuclease activity B (Aeromonas salmonicida (strain A449)).